Consider the following 164-residue polypeptide: Transcription antitermination protein NusB (164 aa).

This sequence belongs to the NusB family.

Involved in transcription antitermination. Required for transcription of ribosomal RNA (rRNA) genes. Binds specifically to the boxA antiterminator sequence of the ribosomal RNA (rrn) operons. This chain is Transcription antitermination protein NusB, found in Desulfovibrio desulfuricans (strain ATCC 27774 / DSM 6949 / MB).